Consider the following 160-residue polypeptide: Endoribonuclease YbeY (160 aa).

Zn(2+) contacts are provided by His123, His127, and His133.

Belongs to the endoribonuclease YbeY family. The cofactor is Zn(2+).

It localises to the cytoplasm. Its function is as follows. Single strand-specific metallo-endoribonuclease involved in late-stage 70S ribosome quality control and in maturation of the 3' terminus of the 16S rRNA. The protein is Endoribonuclease YbeY of Roseiflexus sp. (strain RS-1).